The chain runs to 387 residues: Odorant receptor 94a (387 aa).

The Cytoplasmic segment spans residues 1 to 45; it reads MDKHKDRIESMRLILQVMQLFGLWPWSLKSEEEWTFTGFVKRNYR. A helical transmembrane segment spans residues 46–66; the sequence is FLLHLPITFTFIGLMWLEAFI. Residues 67-75 lie on the Extracellular side of the membrane; sequence SSNLEQAGQ. The helical transmembrane segment at 76–96 threads the bilayer; sequence VLYMSITEMALVVKILSIWHY. The Cytoplasmic segment spans residues 97-133; sequence RTEAWRLMYELQHAPDYQLHNQEEVDFWRREQRFFKW. The helical transmembrane segment at 134-154 threads the bilayer; sequence FFYIYILISLGVVYSGCTGVL. At 155 to 191 the chain is on the extracellular side; sequence FLEGYELPFAYYVPFEWQNERRYWFAYGYDMAGMTLT. The helical transmembrane segment at 192-212 threads the bilayer; the sequence is CISNITLDTLGCYFLFHISLL. Over 213 to 255 the chain is Cytoplasmic; that stretch reads YRLLGLRLRETKNMKNDTIFGQQLRAIFIMHQRIRSLTLTCQR. A helical membrane pass occupies residues 256-276; it reads IVSPYILSQIILSALIICFSG. Residues 277-290 lie on the Extracellular side of the membrane; it reads YRLQHVGIRDNPGQ. Residues 291-311 form a helical membrane-spanning segment; it reads FISMLQFVSVMILQIYLPCYY. Residues 312–362 are Cytoplasmic-facing; sequence GNEITVYANQLTNEVYHTNWLECRPPIRKLLNAYMEHLKKPVTIRAGNFFA. Residues 363–383 traverse the membrane as a helical segment; sequence VGLPIFVKTINNAYSFLALLL. The N-linked (GlcNAc...) asparagine glycan is linked to asparagine 384. The Extracellular segment spans residues 384–387; sequence NVSN.

Belongs to the insect chemoreceptor superfamily. Heteromeric odorant receptor channel (TC 1.A.69) family. Or2a subfamily. Interacts with Orco. Complexes exist early in the endomembrane system in olfactory sensory neurons (OSNs), coupling these complexes to the conserved ciliary trafficking pathway.

Its subcellular location is the cell membrane. In terms of biological role, odorant receptor which mediates acceptance or avoidance behavior, depending on its substrates. The odorant receptor repertoire encodes a large collection of odor stimuli that vary widely in identity, intensity, and duration. May form a complex with Orco to form odorant-sensing units, providing sensitive and prolonged odorant signaling and calcium permeability. The protein is Odorant receptor 94a (Or94a) of Drosophila melanogaster (Fruit fly).